Consider the following 157-residue polypeptide: 2-C-methyl-D-erythritol 2,4-cyclodiphosphate synthase (157 aa).

A divalent metal cation-binding residues include Asp8 and His10. Residues 8–10 and 34–35 each bind 4-CDP-2-C-methyl-D-erythritol 2-phosphate; these read DVH and HS. A divalent metal cation is bound at residue His42. 4-CDP-2-C-methyl-D-erythritol 2-phosphate contacts are provided by residues 56-58, 61-65, 100-106, 132-135, Phe139, and Arg142; these read DIG, FPDTD, AQAPKMA, and TTTE.

It belongs to the IspF family. Homotrimer. A divalent metal cation serves as cofactor.

The catalysed reaction is 4-CDP-2-C-methyl-D-erythritol 2-phosphate = 2-C-methyl-D-erythritol 2,4-cyclic diphosphate + CMP. Its pathway is isoprenoid biosynthesis; isopentenyl diphosphate biosynthesis via DXP pathway; isopentenyl diphosphate from 1-deoxy-D-xylulose 5-phosphate: step 4/6. Functionally, involved in the biosynthesis of isopentenyl diphosphate (IPP) and dimethylallyl diphosphate (DMAPP), two major building blocks of isoprenoid compounds. Catalyzes the conversion of 4-diphosphocytidyl-2-C-methyl-D-erythritol 2-phosphate (CDP-ME2P) to 2-C-methyl-D-erythritol 2,4-cyclodiphosphate (ME-CPP) with a corresponding release of cytidine 5-monophosphate (CMP). This is 2-C-methyl-D-erythritol 2,4-cyclodiphosphate synthase from Pseudomonas fluorescens (strain ATCC BAA-477 / NRRL B-23932 / Pf-5).